Here is a 1251-residue protein sequence, read N- to C-terminus: Myosin-1 (1251 aa).

Residues 1-37 (MGQSKRPFKNKEEKKSRGFGRSRHDDAGAGGRPQVKK) form a disordered region. Residues 9–27 (KNKEEKKSRGFGRSRHDDA) are compositionally biased toward basic and acidic residues. The 680-residue stretch at 48–727 (IGVSDLTLLS…TLFALEHMRD (680 aa)) folds into the Myosin motor domain. 141-148 (GESGAGKT) contacts ATP. S369 is modified (phosphoserine). Positions 416–498 (TIGILDIYGF…PGVFAALNDA (83 aa)) are actin-binding. IQ domains lie at 731-751 (HNMA…RTEC) and 752-777 (AIRI…QGHK). The 196-residue stretch at 785-980 (RRRYSLVGSR…PGEPANSVSK (196 aa)) folds into the TH1 domain. Disordered stretches follow at residues 958 to 1093 (RDDV…SNEL) and 1135 to 1227 (AKTP…ASIA). A compositionally biased stretch (low complexity) spans 1040 to 1052 (VAQSVTAVAAAHA). The span at 1061–1073 (RPPPPPPPTQPPA) shows a compositional bias: pro residues. Residues 1074–1135 (PKKDTAKALY…PEAYLEPIVA (62 aa)) enclose the SH3 domain. Residues 1139 to 1148 (SLPPPPPSLP) show a composition bias toward pro residues. 2 stretches are compositionally biased toward polar residues: residues 1150–1161 (QSKSAVSNTLPN) and 1216–1225 (ATPSSLSNAS).

This sequence belongs to the TRAFAC class myosin-kinesin ATPase superfamily. Myosin family. Phosphorylation of the TEDS site (Ser-369) is required for the polarization of the actin cytoskeleton. Phosphorylation probably activates the myosin-I ATPase activity.

It localises to the cytoplasm. The protein localises to the cytoskeleton. It is found in the actin patch. Type-I myosin implicated in the organization of the actin cytoskeleton. Required for proper actin cytoskeleton polarization. At the cell cortex, assembles in patch-like structures together with proteins from the actin-polymerizing machinery and promotes actin assembly. Functions as actin nucleation-promoting factor (NPF) for the Arp2/3 complex. This is Myosin-1 (MYO1) from Coccidioides immitis (strain RS) (Valley fever fungus).